The sequence spans 418 residues: S-adenosylmethionine synthase (418 aa).

H16 serves as a coordination point for ATP. D18 serves as a coordination point for Mg(2+). E44 contributes to the K(+) binding site. Positions 57 and 100 each coordinate L-methionine. A flexible loop region spans residues 100–110 (QSPDISQGVTK). ATP contacts are provided by residues 175–177 (DGK), 251–252 (KF), D260, 266–267 (RK), A283, and K287. L-methionine is bound at residue D260. K291 provides a ligand contact to L-methionine.

This sequence belongs to the AdoMet synthase family. In terms of assembly, homotetramer; dimer of dimers. Mg(2+) is required as a cofactor. The cofactor is K(+).

The protein localises to the cytoplasm. The catalysed reaction is L-methionine + ATP + H2O = S-adenosyl-L-methionine + phosphate + diphosphate. It participates in amino-acid biosynthesis; S-adenosyl-L-methionine biosynthesis; S-adenosyl-L-methionine from L-methionine: step 1/1. Its function is as follows. Catalyzes the formation of S-adenosylmethionine (AdoMet) from methionine and ATP. The overall synthetic reaction is composed of two sequential steps, AdoMet formation and the subsequent tripolyphosphate hydrolysis which occurs prior to release of AdoMet from the enzyme. The protein is S-adenosylmethionine synthase of Gloeothece citriformis (strain PCC 7424) (Cyanothece sp. (strain PCC 7424)).